We begin with the raw amino-acid sequence, 549 residues long: Polymorphic pseudokinase ROP5 (549 aa).

An N-terminal signal peptide occupies residues 1–24 (MATKLARLATWLVLVGCLLWRAGA). The 294-residue stretch at 234–527 (LKLVEPLRVG…LEAMETPEFL (294 aa)) folds into the Protein kinase domain. ATP is bound by residues Arg241, Asp244, Arg245, Ser246, Lys263, Met337, Pro338, Ala340, Asp343, and Asp393. Asp244 contacts ADP. ADP contacts are provided by Ser246, Lys263, Met337, Pro338, and Ala340. Residue Asp393 coordinates ADP. 2 residues coordinate Mg(2+): Asp393 and Asp407. Asn434 is a glycosylation site (N-linked (GlcNAc...) asparagine). A disulfide bridge links Cys458 with Cys492.

Belongs to the protein kinase superfamily. Ser/Thr protein kinase family. Component of a complex at least composed of ROP18 and ROP5. Interacts with GRA7. Interacts with ROP17. Interacts with mouse IRGA6/IIGP1; the interaction results in inhibition of IRGA6/IIGP1 GTPase activity and/or oligomerization.

The protein localises to the secreted. Its subcellular location is the parasitophorous vacuole. The protein resides in the cytoplasmic vesicle. It localises to the secretory vesicle. It is found in the rhoptry. Pseudokinase. Essential for virulence in the type I lineage. Mediates parasite survival in mouse monocytes. Required for the parasite ability to resist mouse innate immune effectors triggered by the IFN-gamma (IFNG). Reduces the accumulation of mouse IRGA6 (IIGP1) and IRGB6 (TGTP1/TGTP2), immunity-related GTPases (IRGs) that protect mice from infection by certain intracellular pathogens, on the parasitophorous vacuole and IRG-mediated killing of parasites by mouse cells. Regulates the activity of ROP18, an active kinase that targets IRGs to prevent IRG-mediated parasite killing by mouse cells. Acts as an allosteric inhibitor of mouse IRGA6 (IIGP1). Does not affect IFN-gamma (IFNG)-mediated parasite killing in human cells that do not possess the large variety of IRGs. The sequence is that of Polymorphic pseudokinase ROP5 from Toxoplasma gondii.